The primary structure comprises 163 residues: Large ribosomal subunit protein uL10 (163 aa).

It belongs to the universal ribosomal protein uL10 family. In terms of assembly, part of the ribosomal stalk of the 50S ribosomal subunit. The N-terminus interacts with L11 and the large rRNA to form the base of the stalk. The C-terminus forms an elongated spine to which L12 dimers bind in a sequential fashion forming a multimeric L10(L12)X complex.

In terms of biological role, forms part of the ribosomal stalk, playing a central role in the interaction of the ribosome with GTP-bound translation factors. This is Large ribosomal subunit protein uL10 from Haemophilus influenzae (strain PittGG).